The sequence spans 31 residues: Cytochrome b6-f complex subunit 6 (31 aa).

Residues Val3–Ile23 form a helical membrane-spanning segment.

Belongs to the PetL family. As to quaternary structure, the 4 large subunits of the cytochrome b6-f complex are cytochrome b6, subunit IV (17 kDa polypeptide, PetD), cytochrome f and the Rieske protein, while the 4 small subunits are PetG, PetL, PetM and PetN. The complex functions as a dimer.

The protein resides in the plastid. It localises to the chloroplast thylakoid membrane. Functionally, component of the cytochrome b6-f complex, which mediates electron transfer between photosystem II (PSII) and photosystem I (PSI), cyclic electron flow around PSI, and state transitions. PetL is important for photoautotrophic growth as well as for electron transfer efficiency and stability of the cytochrome b6-f complex. This chain is Cytochrome b6-f complex subunit 6, found in Phaeodactylum tricornutum (strain CCAP 1055/1).